A 168-amino-acid chain; its full sequence is RNA pyrophosphohydrolase (168 aa).

Positions 8–160 (PYRTCVGIAL…KRPVYERVAK (153 aa)) constitute a Nudix hydrolase domain. Positions 47-68 (GGVDPGEDAWEAAKRELYEETS) match the Nudix box motif.

The protein belongs to the Nudix hydrolase family. RppH subfamily. Requires a divalent metal cation as cofactor.

Its function is as follows. Accelerates the degradation of transcripts by removing pyrophosphate from the 5'-end of triphosphorylated RNA, leading to a more labile monophosphorylated state that can stimulate subsequent ribonuclease cleavage. The polypeptide is RNA pyrophosphohydrolase (Bradyrhizobium sp. (strain ORS 278)).